The primary structure comprises 3354 residues: Cadherin-23 (3354 aa).

Positions 1 to 23 (MGRHVATSCHVAWLLVLISGCWG) are cleaved as a signal peptide. Over 24 to 3064 (QVNRLPFFTN…SVRLPDDMSA (3041 aa)) the chain is Extracellular. Cadherin domains follow at residues 34-132 (HFFD…APTF), 133-236 (HNQP…DPIF), 237-348 (INLP…APEF), 349-460 (NSSE…RPIF), 461-561 (SQPL…VPTF), 562-671 (QKDA…PPTF), 672-784 (SKPA…APYY), 779-890 (KDAP…DPTF), 891-995 (QNLP…TPTF), 996-1102 (FPAV…RPIF), 1103-1208 (LQSS…APVF), 1210-1313 (QQQY…AVQF), 1314-1418 (SNAS…SPRF), 1420-1527 (FTSD…PPVI), 1529-1634 (SPFG…APMF), 1635-1744 (QQPH…VPTF), 1745-1851 (PRDY…DPVL), 1852-1959 (LNLP…HPLF), 1960-2069 (TKST…RPTF), 2070-2174 (SPAT…RPEF), 2175-2293 (LNPI…TPQF), 2297-2402 (GITY…NPIF), 2403-2509 (DQPS…RPQF), 2510-2611 (SKPQ…RPVF), 2614-2722 (PPNG…EPLF), 2729-2846 (SPQY…PPRF), and 2847-2975 (TKAE…EEEF). N-linked (GlcNAc...) asparagine glycans are attached at residues N155 and N206. N349, N393, N434, N466, N472, N652, N694, N765, N810, N827, N941, N1001, N1018, N1171, N1282, N1315, N1473, N1534, N1651, N1667, N1818, N1857, N1889, N1902, N2013, N2050, N2129, N2168, N2195, N2263, N2357, and N2369 each carry an N-linked (GlcNAc...) asparagine glycan. N-linked (GlcNAc...) asparagine glycosylation is found at N2616, N2749, N2808, N2877, N2896, N2941, and N2981. A helical transmembrane segment spans residues 3065-3085 (LQMAIIVLAILLFLAAMLFVL). Topologically, residues 3086–3354 (MNWYYRTVHK…METPLEITEL (269 aa)) are cytoplasmic.

In terms of assembly, antiparallel heterodimer with PCDH15. Interacts with USH1C and USH1G. As to expression, particularly strong expression in the retina. Found also in the cochlea.

It is found in the cell membrane. Its function is as follows. Cadherins are calcium-dependent cell adhesion proteins. They preferentially interact with themselves in a homophilic manner in connecting cells. CDH23 is required for establishing and/or maintaining the proper organization of the stereocilia bundle of hair cells in the cochlea and the vestibule during late embryonic/early postnatal development. It is part of the functional network formed by USH1C, USH1G, CDH23 and MYO7A that mediates mechanotransduction in cochlear hair cells. Required for normal hearing. This Homo sapiens (Human) protein is Cadherin-23.